Reading from the N-terminus, the 739-residue chain is Nuclear pore complex protein NUP62 (739 aa).

19 tandem repeats follow at residues 6–7, 17–18, 50–51, 52–53, 68–69, 70–71, 78–79, 80–81, 91–92, 93–94, 108–109, 110–111, 124–125, 141–142, 159–160, 174–175, 186–187, 207–208, and 221–222. The tract at residues 6–450 is 26 X 2 AA repeats of F-G; the sequence is FGQSNSVGGF…AATFSTTGFG (445 aa). The disordered stretch occupies residues 18–67; it reads GSSSATNSSSASSTTSPLSFSFNQSSNPSSTGFGFGSSVSSTPASSTTPS. Low complexity predominate over residues 79–218; that stretch reads GFGSSASSST…ASSSAATSTS (140 aa). The segment at 79-245 is disordered; sequence GFGSSASSST…VASSAPGSSS (167 aa). Positions 232 to 245 are enriched in low complexity; the sequence is PSFSVASSAPGSSS. 5 tandem repeats follow at residues 248–249, 271–272, 280–281, 308–309, and 366–367. Disordered stretches follow at residues 281 to 329, 341 to 366, and 399 to 418; these read GSSS…ASPF, TASS…SFSF, and TTTS…SAPA. 2 tandem repeats follow at residues 426–427 and 449–450. The interval 471-533 is disordered; sequence KTSTPASSSQ…AVAPVAGSPK (63 aa). Positions 472-519 are enriched in low complexity; the sequence is TSTPASSSQPQTTSPAFSFSLPSSTSTTAPATSSATTTQTTLVVPSSS. Residues 584-674 adopt a coiled-coil conformation; the sequence is RLEIEVAKVV…IRSIIQSVNA (91 aa).

The protein belongs to the nucleoporin NSP1/NUP62 family. Part of the nuclear pore complex (NPC). The NPC has an eight-fold symmetrical structure comprising a central transport channel and two rings, the cytoplasmic and nuclear rings, to which eight filaments are attached. The cytoplasmic filaments have loose ends, while the nuclear filaments are joined in a distal ring, forming a nuclear basket. NPCs are highly dynamic in configuration and composition, and can be devided in 3 subcomplexes, the NUP62 subcomplex, the NUP107-160 subcomplex and the NUP93 subcomplex, containing approximately 30 different nucleoporin proteins. Interacts with NUP58 and the importin KPNB1.

The protein resides in the nucleus envelope. It is found in the nucleus. The protein localises to the nuclear pore complex. This chain is Nuclear pore complex protein NUP62, found in Arabidopsis thaliana (Mouse-ear cress).